We begin with the raw amino-acid sequence, 149 residues long: Transcriptional repressor NrdR (149 aa).

A zinc finger lies at 3-34 (CPYCSYEESKVVDSRSAEDYNAIRRRRECLRC). The region spanning 49–139 (ILVIKKDLSR…VYRQFKDINT (91 aa)) is the ATP-cone domain.

This sequence belongs to the NrdR family. The cofactor is Zn(2+).

Negatively regulates transcription of bacterial ribonucleotide reductase nrd genes and operons by binding to NrdR-boxes. In Clostridium perfringens (strain ATCC 13124 / DSM 756 / JCM 1290 / NCIMB 6125 / NCTC 8237 / Type A), this protein is Transcriptional repressor NrdR.